The following is a 465-amino-acid chain: Tyrosine 3-monooxygenase (465 aa).

His-294, His-299, and Glu-339 together coordinate Fe cation.

It belongs to the biopterin-dependent aromatic amino acid hydroxylase family. Requires Fe(2+) as cofactor.

The protein resides in the cytoplasm. Its subcellular location is the perinuclear region. The enzyme catalyses (6R)-L-erythro-5,6,7,8-tetrahydrobiopterin + L-tyrosine + O2 = (4aS,6R)-4a-hydroxy-L-erythro-5,6,7,8-tetrahydrobiopterin + L-dopa. It functions in the pathway catecholamine biosynthesis; dopamine biosynthesis; dopamine from L-tyrosine: step 1/2. The sequence is that of Tyrosine 3-monooxygenase (TH) from Schistosoma mansoni (Blood fluke).